We begin with the raw amino-acid sequence, 210 residues long: Glutathione S-transferase P (210 aa).

Residues 2-81 (PPYTIVYFPV…HLGRTLGLYG (80 aa)) form the GST N-terminal domain. Y4 is modified (phosphotyrosine; by EGFR). Glutathione contacts are provided by residues Y8, R14, W39, K45, and 52 to 53 (QL). Position 62 is a phosphothreonine (T62). 65–66 (QS) contributes to the glutathione binding site. A GST C-terminal domain is found at 83–204 (DQQEAALVDM…ASPEHMNRPI (122 aa)). K103 and K116 each carry N6-succinyllysine. Residue K128 is modified to N6-acetyllysine.

The protein belongs to the GST superfamily. Pi family. As to quaternary structure, homodimer. Interacts with CDK5.

The protein resides in the cytoplasm. It localises to the mitochondrion. It is found in the nucleus. The enzyme catalyses RX + glutathione = an S-substituted glutathione + a halide anion + H(+). The catalysed reaction is prostaglandin J2 + glutathione = prostaglandin J2-S-(R)-glutathione. It carries out the reaction prostaglandin J2 + glutathione = prostaglandin J2-S-(S)-glutathione. It catalyses the reaction prostaglandin A2 + glutathione = prostaglandin A2-S-(S)-glutathione. The enzyme catalyses 11(S)-hydroxy-14(S),15(S)-epoxy-(5Z,8Z,12E)-eicosatrienoate + glutathione = (11S,15S)-dihydroxy-14(R)-S-glutathionyl-(5Z,8Z,12E)-eicosatrienoate. Its function is as follows. Conjugation of reduced glutathione to a wide number of exogenous and endogenous hydrophobic electrophiles. Involved in the formation of glutathione conjugates of both prostaglandin A2 (PGA2) and prostaglandin J2 (PGJ2). Participates in the formation of novel hepoxilin regioisomers. Negatively regulates CDK5 activity via p25/p35 translocation to prevent neurodegeneration. This chain is Glutathione S-transferase P (GSTP1), found in Bos taurus (Bovine).